Consider the following 99-residue polypeptide: MMNMQNMMKQAQKLQKQMEQKQADLAAMQFTGKSAQDLVTATFTGDKKLVGIDFKEAVVDPEDVETLQDMTTQAINDALTQIDETTKKTLGAFAGKLPF.

The protein belongs to the YbaB/EbfC family. As to quaternary structure, homodimer.

It localises to the cytoplasm. Its subcellular location is the nucleoid. In terms of biological role, binds to DNA and alters its conformation. May be involved in regulation of gene expression, nucleoid organization and DNA protection. This chain is Nucleoid-associated protein SPy_1862/M5005_Spy1580, found in Streptococcus pyogenes serotype M1.